Consider the following 363-residue polypeptide: Spermidine/putrescine import ATP-binding protein PotA (363 aa).

Residues 4–234 (LEIRNVTRRF…PRNHFVADFI (231 aa)) enclose the ABC transporter domain. 36–43 (GPSGCGKT) is a binding site for ATP.

Belongs to the ABC transporter superfamily. Spermidine/putrescine importer (TC 3.A.1.11.1) family. In terms of assembly, the complex is composed of two ATP-binding proteins (PotA), two transmembrane proteins (PotB and PotC) and a solute-binding protein (PotD).

Its subcellular location is the cell inner membrane. It carries out the reaction ATP + H2O + polyamine-[polyamine-binding protein]Side 1 = ADP + phosphate + polyamineSide 2 + [polyamine-binding protein]Side 1.. Its function is as follows. Part of the ABC transporter complex PotABCD involved in spermidine/putrescine import. Responsible for energy coupling to the transport system. The chain is Spermidine/putrescine import ATP-binding protein PotA from Nitrosospira multiformis (strain ATCC 25196 / NCIMB 11849 / C 71).